We begin with the raw amino-acid sequence, 168 residues long: Lipoprotein signal peptidase (168 aa).

Transmembrane regions (helical) follow at residues 6–26 (VLAA…DQIT), 70–90 (WFLA…IAKL), and 98–118 (ALAL…RMLL). Catalysis depends on residues D123 and D141. The helical transmembrane segment at 139 to 159 (IADSAICIGAALLVWDSLFGT) threads the bilayer.

The protein belongs to the peptidase A8 family.

Its subcellular location is the cell inner membrane. It catalyses the reaction Release of signal peptides from bacterial membrane prolipoproteins. Hydrolyzes -Xaa-Yaa-Zaa-|-(S,diacylglyceryl)Cys-, in which Xaa is hydrophobic (preferably Leu), and Yaa (Ala or Ser) and Zaa (Gly or Ala) have small, neutral side chains.. It functions in the pathway protein modification; lipoprotein biosynthesis (signal peptide cleavage). In terms of biological role, this protein specifically catalyzes the removal of signal peptides from prolipoproteins. In Teredinibacter turnerae (strain ATCC 39867 / T7901), this protein is Lipoprotein signal peptidase.